Consider the following 274-residue polypeptide: MTEFTTLLQQGNAWFFIPSAILLGALHGLEPGHSKTMMAAFIIAIKGTIKQAVMLGLAATISHTAVVWLIAFGGMVISKRFTAQSAEPWLQLISAVIIIGTAFWMFWRTWRGERNWLENMHEYDYEHHHHDHEDHHDHGHHHHHEHGEYQDAHARAHANDIKRRFDGREVTNWQILLFGLTGGLIPCPAAITVLLICIQLKALTLGATLVVSFSIGLALTLVTVGVGAAISVQQVAKRWSGFNTLAKRAPYFSSLLIGLVGVYMGVHGFMGIMR.

The Periplasmic segment spans residues 1–12 (MTEFTTLLQQGN). Residues 13–33 (AWFFIPSAILLGALHGLEPGH) form a helical membrane-spanning segment. Topologically, residues 34-56 (SKTMMAAFIIAIKGTIKQAVMLG) are cytoplasmic. Residues 57–77 (LAATISHTAVVWLIAFGGMVI) form a helical membrane-spanning segment. Over 78 to 86 (SKRFTAQSA) the chain is Periplasmic. The chain crosses the membrane as a helical span at residues 87–107 (EPWLQLISAVIIIGTAFWMFW). Over 108-174 (RTWRGERNWL…FDGREVTNWQ (67 aa)) the chain is Cytoplasmic. The disordered stretch occupies residues 130 to 149 (HDHEDHHDHGHHHHHEHGEY). Residues 175 to 195 (ILLFGLTGGLIPCPAAITVLL) form a helical membrane-spanning segment. Residues 196-209 (ICIQLKALTLGATL) are Periplasmic-facing. Residues 210 to 230 (VVSFSIGLALTLVTVGVGAAI) traverse the membrane as a helical segment. Over 231 to 251 (SVQQVAKRWSGFNTLAKRAPY) the chain is Cytoplasmic. Residues 252–272 (FSSLLIGLVGVYMGVHGFMGI) traverse the membrane as a helical segment. Residues 273-274 (MR) lie on the Periplasmic side of the membrane.

This sequence belongs to the NiCoT transporter (TC 2.A.52) family. RcnA subfamily.

The protein resides in the cell inner membrane. In terms of biological role, efflux system for nickel and cobalt. The chain is Nickel/cobalt efflux system RcnA (rcnA) from Shigella sonnei (strain Ss046).